Consider the following 240-residue polypeptide: UDP-2,3-diacylglucosamine hydrolase (240 aa).

Mn(2+) contacts are provided by Asp-8, His-10, Asp-41, Asn-79, and His-114. 79-80 contributes to the substrate binding site; it reads NR. 5 residues coordinate substrate: Asp-122, Ser-160, Thr-164, Lys-167, and His-195. The Mn(2+) site is built by His-195 and His-197.

This sequence belongs to the LpxH family. Mn(2+) serves as cofactor.

It is found in the cell inner membrane. The enzyme catalyses UDP-2-N,3-O-bis[(3R)-3-hydroxytetradecanoyl]-alpha-D-glucosamine + H2O = 2-N,3-O-bis[(3R)-3-hydroxytetradecanoyl]-alpha-D-glucosaminyl 1-phosphate + UMP + 2 H(+). The protein operates within glycolipid biosynthesis; lipid IV(A) biosynthesis; lipid IV(A) from (3R)-3-hydroxytetradecanoyl-[acyl-carrier-protein] and UDP-N-acetyl-alpha-D-glucosamine: step 4/6. In terms of biological role, hydrolyzes the pyrophosphate bond of UDP-2,3-diacylglucosamine to yield 2,3-diacylglucosamine 1-phosphate (lipid X) and UMP by catalyzing the attack of water at the alpha-P atom. Involved in the biosynthesis of lipid A, a phosphorylated glycolipid that anchors the lipopolysaccharide to the outer membrane of the cell. In Pseudomonas aeruginosa (strain UCBPP-PA14), this protein is UDP-2,3-diacylglucosamine hydrolase.